The primary structure comprises 471 residues: Serine hydroxymethyltransferase 4 (471 aa).

M1 carries the post-translational modification N-acetylmethionine. S39 serves as a coordination point for L-serine. 3 residues coordinate pemetrexed: S39, Y59, and E61. L-serine-binding residues include E61 and Y69. Pemetrexed is bound by residues 105–107 (SGS), H134, S190, and H218. L-serine contacts are provided by H218 and K244. Residue K244 is modified to N6-(pyridoxal phosphate)lysine. G290 provides a ligand contact to pemetrexed. Residue K373 participates in methotrexate binding. R389 is an L-serine binding site. Residue R389 coordinates pemetrexed.

The protein belongs to the SHMT family. As to quaternary structure, homotetramer. Interacts with UBP16. Requires pyridoxal 5'-phosphate as cofactor. Mostly expressed in flowers, less abundant in roots, inflorescence stems, and siliques, and barely detectable in leaves.

It localises to the cytoplasm. It catalyses the reaction (6R)-5,10-methylene-5,6,7,8-tetrahydrofolate + glycine + H2O = (6S)-5,6,7,8-tetrahydrofolate + L-serine. Its pathway is one-carbon metabolism; tetrahydrofolate interconversion. With respect to regulation, inhibited by the antifolate drugs methotrexate and pemetrexed. Functionally, catalyzes the interconversion of serine and glycine with the conversion of tetrahydrofolate (THF) into 5,10-methylene-THF. The polypeptide is Serine hydroxymethyltransferase 4 (Arabidopsis thaliana (Mouse-ear cress)).